The chain runs to 146 residues: 3-hydroxyacyl-[acyl-carrier-protein] dehydratase FabZ (146 aa).

His-49 is a catalytic residue.

This sequence belongs to the thioester dehydratase family. FabZ subfamily.

It localises to the cytoplasm. It carries out the reaction a (3R)-hydroxyacyl-[ACP] = a (2E)-enoyl-[ACP] + H2O. Involved in unsaturated fatty acids biosynthesis. Catalyzes the dehydration of short chain beta-hydroxyacyl-ACPs and long chain saturated and unsaturated beta-hydroxyacyl-ACPs. The chain is 3-hydroxyacyl-[acyl-carrier-protein] dehydratase FabZ from Pseudomonas fluorescens (strain ATCC BAA-477 / NRRL B-23932 / Pf-5).